We begin with the raw amino-acid sequence, 1010 residues long: MSNTKVRIYDLSKELNLDNKDILDICDQLNIEYKSHSSTISEEDAQRIKAIAAKGLASSTSKNSTGQRESASPAEEKKQKILALHKHNRPETGEEGESYPGQAGSSAKPTLISPPRPPVKPLVAPPGRDEAAEKTPPTAAEMLSHSPSVKETPTETPLVPEAAPTLIAPPNRPSLTPKPRPETASGRPEPRSKNAPGSNDRPRGEKRERGESENAPSPERRVGLAKPEKPTLNRKPDGKSPKLAEPAREVRETVELKRPVRPGLPAKISATSEEETDTTKKSGVDGTEIDTDTGLLGADGPKKLKRPTMPPRMAKKSTWEEEEEEEKKAAKTAKTAGKNKRRTQALFEDDDDLESELSGLINTPSFTLSTARPPKPPTAKAAPPGTPTAVKVKRPSKPTAHTGSPKSERQEPQEEKRPESIVVTGSLTVRDLSELMKVPETEIIRTLFFKGMAVNITQTLDVDTIEMIARDFEIAVETPSTQSAAIKTTEMIDVSDWESLQRRPPVVTIMGHVDHGKTTLLDSIRKTKVAQGEAGGITQHIGAYHVDVEHNGKPEQIVFLDTPGHEAFTAMRARGARVTDIAVLVVAADDGVQPQTKEAISHARAAEVPIVVAINKVDKPSANPDRIKQELTEQGLVAEDWGGETIMVPVSALRGENLDNLLEMILLVAEVEELVANPDRLAKGTVIEANLDRTKGPVATLLVQNGTLRVGDSIVAGSVFGKIRAMIDDRGQKVEAATPSFAVEILGLSDVPAAGDEFDVYESEKEARSIADQRAIERRNTRLQQALSSRRVSLSTLSIQAQEGQLKELNLILKADVQGSVEAILGALKQLPQNEVQIRVLLASPGEITETDVDLAAASGAVVVGFNTTLASGARASADREGVDIRDYNIIYKLLDDIQGAMEGLLDPEEVEEHLGFAEVRAVFTVGRGAVAGCYVQSGKLVRNRFLRVRRGKEIVYQGVLDSLKRMKEDAREVATGFECGVGVSKFNDWKEGDIIEAYEMVMKRRTLSS.

Disordered regions lie at residues 54–350 (KGLA…FEDD) and 364–420 (PSFT…RPES). The span at 57-70 (ASSTSKNSTGQRES) shows a compositional bias: polar residues. The segment covering 112-124 (ISPPRPPVKPLVA) has biased composition (pro residues). Over residues 145 to 155 (HSPSVKETPTE) the composition is skewed to polar residues. The span at 200-258 (DRPRGEKRERGESENAPSPERRVGLAKPEKPTLNRKPDGKSPKLAEPAREVRETVELKR) shows a compositional bias: basic and acidic residues. Residues 378-389 (TAKAAPPGTPTA) show a composition bias toward low complexity. A compositionally biased stretch (basic and acidic residues) spans 406–419 (KSERQEPQEEKRPE). A tr-type G domain is found at 502 to 675 (RRPPVVTIMG…LLVAEVEELV (174 aa)). Residues 511–518 (GHVDHGKT) form a G1 region. Residue 511–518 (GHVDHGKT) participates in GTP binding. The interval 536–540 (GITQH) is G2. Residues 561-564 (DTPG) are G3. Residues 561–565 (DTPGH) and 615–618 (NKVD) contribute to the GTP site. The G4 stretch occupies residues 615-618 (NKVD). The segment at 651 to 653 (SAL) is G5.

This sequence belongs to the TRAFAC class translation factor GTPase superfamily. Classic translation factor GTPase family. IF-2 subfamily.

It is found in the cytoplasm. In terms of biological role, one of the essential components for the initiation of protein synthesis. Protects formylmethionyl-tRNA from spontaneous hydrolysis and promotes its binding to the 30S ribosomal subunits. Also involved in the hydrolysis of GTP during the formation of the 70S ribosomal complex. The sequence is that of Translation initiation factor IF-2 from Microcystis aeruginosa (strain NIES-843 / IAM M-2473).